Consider the following 178-residue polypeptide: 6,7-dimethyl-8-ribityllumazine synthase (178 aa).

5-amino-6-(D-ribitylamino)uracil is bound by residues Tyr27, Ser58–Glu60, and Cys82–Ile84. A (2S)-2-hydroxy-3-oxobutyl phosphate-binding site is contributed by Ala87–Thr88. His90 serves as the catalytic Proton donor. Asn114 is a 5-amino-6-(D-ribitylamino)uracil binding site. Arg128 contributes to the (2S)-2-hydroxy-3-oxobutyl phosphate binding site.

It belongs to the DMRL synthase family.

It catalyses the reaction (2S)-2-hydroxy-3-oxobutyl phosphate + 5-amino-6-(D-ribitylamino)uracil = 6,7-dimethyl-8-(1-D-ribityl)lumazine + phosphate + 2 H2O + H(+). It functions in the pathway cofactor biosynthesis; riboflavin biosynthesis; riboflavin from 2-hydroxy-3-oxobutyl phosphate and 5-amino-6-(D-ribitylamino)uracil: step 1/2. Its function is as follows. Catalyzes the formation of 6,7-dimethyl-8-ribityllumazine by condensation of 5-amino-6-(D-ribitylamino)uracil with 3,4-dihydroxy-2-butanone 4-phosphate. This is the penultimate step in the biosynthesis of riboflavin. In Jannaschia sp. (strain CCS1), this protein is 6,7-dimethyl-8-ribityllumazine synthase.